A 426-amino-acid chain; its full sequence is Dihydroorotase (426 aa).

Residues His-58 and His-60 each coordinate Zn(2+). Substrate-binding positions include 60-62 (HLR) and Asn-92. The Zn(2+) site is built by Asp-150, His-177, and His-230. Asn-276 provides a ligand contact to substrate. Position 303 (Asp-303) interacts with Zn(2+). Asp-303 is a catalytic residue. Residues His-307 and 321-322 (FG) each bind substrate.

This sequence belongs to the metallo-dependent hydrolases superfamily. DHOase family. Class I DHOase subfamily. It depends on Zn(2+) as a cofactor.

It catalyses the reaction (S)-dihydroorotate + H2O = N-carbamoyl-L-aspartate + H(+). It participates in pyrimidine metabolism; UMP biosynthesis via de novo pathway; (S)-dihydroorotate from bicarbonate: step 3/3. Functionally, catalyzes the reversible cyclization of carbamoyl aspartate to dihydroorotate. This is Dihydroorotase from Listeria monocytogenes serotype 4b (strain F2365).